The primary structure comprises 277 residues: Adenylate kinase (277 aa).

An ATP-binding site is contributed by Gly-72–Thr-77. The NMP stretch occupies residues Ala-92 to Val-121. AMP is bound by residues Thr-93, Arg-98, Gly-119–Val-121, Gly-148–Arg-151, and Gln-155. Residues Gly-189–Asp-226 form an LID region. ATP contacts are provided by residues Arg-190 and Ser-199 to Tyr-200. AMP contacts are provided by Arg-223 and Arg-234. Gln-262 is a binding site for ATP.

It belongs to the adenylate kinase family. AK2 subfamily. Monomer.

The protein resides in the cytoplasm. It is found in the cytosol. Its subcellular location is the mitochondrion intermembrane space. It carries out the reaction AMP + ATP = 2 ADP. Catalyzes the reversible transfer of the terminal phosphate group between ATP and AMP. Plays an important role in cellular energy homeostasis and in adenine nucleotide metabolism. Adenylate kinase activity is critical for regulation of the phosphate utilization and the AMP de novo biosynthesis pathways. This is Adenylate kinase from Eremothecium gossypii (strain ATCC 10895 / CBS 109.51 / FGSC 9923 / NRRL Y-1056) (Yeast).